A 423-amino-acid polypeptide reads, in one-letter code: MTVDLLLGLQWGDEGKGKIVDVLTSNYDIIARFQGGPNAGHTLEFDGIKHVLRTIPSGIFHKDSVNIIGNGVVIDPVVFQKEIEGLEKFNLDIKKKLIISRKAHLILPTHRLLDAASEASKGKAKIGSTLKGIGPTYMDKTGRNGLRVGDIELEDFKERYRSLADKHEAMIAFYDVNIQYNLAELEKEFFEAIEELKKLDFIDSEEYMHQAQKAGKSILCEGAQGSLLDVDFGTYPFVTSSNTTAAGACTGLGIAPNKIKEVYGIFKAYVTRVGSGPFPTELFDEVGATMARVGNEFGSVTGRQRRCGWLDLVALKYAVQVNGVTQLMMMKGDVLSGFETLKVCTEYNYKGQNISHFPYNIEPENVTPVYKEFKGWKQDLTGLTTYDQLPVELKEYIEFIEKEIEVPIKIVSVGPDRKQTITK.

Residues 12–18 and 40–42 each bind GTP; these read GDEGKGK and GHT. The active-site Proton acceptor is the D13. Mg(2+) contacts are provided by D13 and G40. Residues 13–16, 38–41, T129, R143, Q224, T239, and R303 contribute to the IMP site; these read DEGK and NAGH. H41 (proton donor) is an active-site residue. A substrate-binding site is contributed by 299 to 305; that stretch reads SVTGRQR. Residues R305, 331–333, and 412–414 contribute to the GTP site; these read KGD and SVG.

It belongs to the adenylosuccinate synthetase family. As to quaternary structure, homodimer. Mg(2+) is required as a cofactor.

The protein localises to the cytoplasm. The catalysed reaction is IMP + L-aspartate + GTP = N(6)-(1,2-dicarboxyethyl)-AMP + GDP + phosphate + 2 H(+). It participates in purine metabolism; AMP biosynthesis via de novo pathway; AMP from IMP: step 1/2. Its function is as follows. Plays an important role in the de novo pathway of purine nucleotide biosynthesis. Catalyzes the first committed step in the biosynthesis of AMP from IMP. This chain is Adenylosuccinate synthetase, found in Flavobacterium johnsoniae (strain ATCC 17061 / DSM 2064 / JCM 8514 / BCRC 14874 / CCUG 350202 / NBRC 14942 / NCIMB 11054 / UW101) (Cytophaga johnsonae).